The sequence spans 1364 residues: Collagen alpha-2(I) chain (1364 aa).

An N-terminal signal peptide occupies residues 1–22 (MLSFVDTRTLLLLAVTSCLATC). Pyrrolidone carboxylic acid is present on glutamine 23. A propeptide spans 23–79 (QSLQEATARKGPSGDRGPRGERGPPGPPGRDGDDGIPGPPGPPGPPGPPGLGGNFAA) (N-terminal propeptide). Residues 26 to 1128 (QEATARKGPS…QPRSPTSLRP (1103 aa)) are disordered. Residues 34-44 (PSGDRGPRGER) show a composition bias toward basic and acidic residues. The span at 59–71 (PGPPGPPGPPGPP) shows a compositional bias: pro residues. A Pyrrolidone carboxylic acid modification is found at glutamine 80. The residue at position 84 (lysine 84) is an Allysine. A compositionally biased stretch (low complexity) spans 93–130 (LMGPRGPPGASGAPGPQGFQGPPGEPGEPGQTGPAGAR). Residues proline 100, proline 106, proline 115, proline 118, proline 121, proline 133, proline 136, proline 145, proline 151, proline 166, proline 169, and proline 172 each carry the 4-hydroxyproline modification. Residues 139–153 (AGEDGHPGKPGRPGE) show a composition bias toward basic and acidic residues. Lysine 175 carries the post-translational modification 5-hydroxylysine; alternate. Lysine 175 is a glycosylation site (O-linked (Gal...) hydroxylysine; alternate). Proline 190 and proline 193 each carry 4-hydroxyproline. Lysine 196 bears the 5-hydroxylysine mark. Proline 199, proline 202, proline 208, proline 217, proline 226, proline 253, proline 256, and proline 259 each carry 4-hydroxyproline. Residues 223–252 (VGAPGPAGARGSDGSVGPVGPAGPIGSAGP) are compositionally biased toward low complexity. A 5-hydroxylysine modification is found at lysine 262. 4-hydroxyproline occurs at positions 271, 286, 295, and 304. Over residues 277-291 (AGPRGEVGLPGLSGP) the composition is skewed to low complexity. Residues 298–319 (PGANGLPGAKGAAGLPGVAGAP) show a composition bias toward low complexity. The residue at position 307 (lysine 307) is a 5-hydroxylysine. 4-hydroxyproline is present on residues proline 313, proline 319, proline 322, proline 328, and proline 346. Residues 328–343 (PGPVGAAGATGARGLV) are compositionally biased toward low complexity. A 5-hydroxylysine modification is found at lysine 352. 9 positions are modified to 4-hydroxyproline: proline 361, proline 367, proline 370, proline 391, proline 394, proline 400, proline 406, proline 439, and proline 442. Residues 396 to 406 (LRGNPGSRGLP) are compositionally biased toward low complexity. Composition is skewed to low complexity over residues 468–487 (LPGI…RGEP) and 511–535 (AGLA…PGLQ). Over residues 536-545 (GVQGGKGEQG) the composition is skewed to gly residues. Low complexity-rich tracts occupy residues 592 to 609 (PGES…SRGP), 621 to 643 (EPGV…PGER), 666 to 688 (SPGR…AGAN), and 715 to 735 (VGPA…QPGA). The span at 736 to 745 (KGERGTKGPK) shows a compositional bias: basic and acidic residues. Residues 748–763 (NGPVGPTGPVGAAGPS) are compositionally biased toward low complexity. Gly residues predominate over residues 773–782 (GSRGDGGPPG). Composition is skewed to low complexity over residues 783–793 (ATGFPGAAGRT), 861–874 (PQGL…LGLP), 891–930 (EPGP…NPGN), 948–961 (YPGN…AGAP), and 978–999 (EPGP…PSGP). Residues 1003 to 1014 (RGDKGEPGDKGP) are compositionally biased toward basic and acidic residues. The span at 1087-1101 (AGPPGPPGPPGPPGP) shows a compositional bias: pro residues. A propeptide spans 1118 to 1364 (DQPRSPTSLR…RLNIGPVCFK (247 aa)) (C-terminal propeptide). Residues 1131–1364 (YEVDATLKSL…RLNIGPVCFK (234 aa)) enclose the Fibrillar collagen NC1 domain. 3 disulfides stabilise this stretch: cysteine 1161–cysteine 1193, cysteine 1201–cysteine 1362, and cysteine 1270–cysteine 1315. Residues aspartate 1179, asparagine 1181, glutamine 1182, cysteine 1184, and aspartate 1187 each coordinate Ca(2+). N-linked (GlcNAc...) asparagine glycosylation occurs at asparagine 1265.

The protein belongs to the fibrillar collagen family. In terms of assembly, trimers of one alpha 2(I) and two alpha 1(I) chains. Interacts (via C-terminus) with TMEM131 (via PapD-L domain); the interaction is direct and is involved in assembly and TRAPPIII ER-to-Golgi transport complex-dependent secretion of collagen. Post-translationally, prolines at the third position of the tripeptide repeating unit (G-X-Y) are hydroxylated in some or all of the chains. Forms the fibrils of tendon, ligaments and bones. In bones the fibrils are mineralized with calcium hydroxyapatite.

It localises to the secreted. The protein localises to the extracellular space. It is found in the extracellular matrix. Type I collagen is a member of group I collagen (fibrillar forming collagen). The sequence is that of Collagen alpha-2(I) chain (COL1A2) from Bos taurus (Bovine).